The primary structure comprises 363 residues: MSFEKFFNTAVSAWMSQEGPDSDIVLSSRIRLARNIVDFRFPTLFSSEEAMQIVALFERTFAHRSYGGAGRFELLKMSELQPIEKRVLVEKHLISPHLAEDSPFGACLLSENEEISIMINEEDHIRIQCLFPGLQLAEALEAASELDDWIEGYVNYAFDERLGYLTSCPTNVGTGLRASVMMHLPALVLTQQINRIIPAINQLGLVVRGTYGEGSEALGNIFQISNQITLGKSEEDIVADLHTIVQQLIAQERAARQALVKTLGIQLEDKVFRSYGILANCRVIESKEAAQCLSDVRLGIDLGYIKNISRNILNELMILTQPGFLQQYAGGALRPEERDVRRAALIRERLKMEERRKMEGDER.

Positions 24-255 constitute a Phosphagen kinase C-terminal domain; sequence IVLSSRIRLA…QQLIAQERAA (232 aa). Residues 27–31, His92, Arg126, 177–181, and 208–213 contribute to the ATP site; these read SSRIR, RASVM, and RGTYGE. The short motif at 338–343 is the RDXXRA motif of the pArg binding pocket involved in allosteric regulation element; that stretch reads RDVRRA.

It belongs to the ATP:guanido phosphotransferase family.

The catalysed reaction is L-arginyl-[protein] + ATP = N(omega)-phospho-L-arginyl-[protein] + ADP + H(+). Appears to be allosterically activated by the binding of pArg-containing polypeptides to the pArg-binding pocket localized in the C-terminal domain of McsB. Its function is as follows. Catalyzes the specific phosphorylation of arginine residues in a large number of proteins. Is part of the bacterial stress response system. Protein arginine phosphorylation has a physiologically important role and is involved in the regulation of many critical cellular processes, such as protein homeostasis, motility, competence, and stringent and stress responses, by regulating gene expression and protein activity. The chain is Protein-arginine kinase from Geobacillus kaustophilus (strain HTA426).